We begin with the raw amino-acid sequence, 150 residues long: Large ribosomal subunit protein bL9 (150 aa).

Belongs to the bacterial ribosomal protein bL9 family.

Functionally, binds to the 23S rRNA. The sequence is that of Large ribosomal subunit protein bL9 from Burkholderia multivorans (strain ATCC 17616 / 249).